The primary structure comprises 70 residues: Kappa-conotoxin-like Sx11.2 (70 aa).

The first 26 residues, 1–26 (MMFRVTSVGCLLLVIVFLNLVVPTSA), serve as a signal peptide directing secretion. Intrachain disulfides connect Cys-27–Cys-41, Cys-34–Cys-46, Cys-40–Cys-50, and Cys-45–Cys-54. Residues Glu-30, Glu-35, and Glu-44 each carry the 4-carboxyglutamate modification. Pro-53 is modified (4-hydroxyproline). Pro-57 carries the post-translational modification Proline amide. The propeptide occupies 61 to 70 (SKLQEFFRQR).

The protein belongs to the conotoxin I2 superfamily. Expressed by the venom duct.

It localises to the secreted. Its function is as follows. Modulator of potassium channels, specifically up-modulates the calcium and voltage-gated BK channels, has no effect on single channel conductance, but increases the open probability of BK channels. The protein is Kappa-conotoxin-like Sx11.2 of Conus striolatus (Cone snail).